We begin with the raw amino-acid sequence, 2549 residues long: Serine/threonine-protein kinase mTOR (2549 aa).

At M1 the chain carries N-acetylmethionine. The tract at residues 1 to 651 is interaction with NBN; it reads MLGTGPATAT…HVVSQTAVQV (651 aa). HEAT repeat units lie at residues 16–53, 55–99, 100–137, 138–179, 180–220, 222–276, 277–313, 314–364, 365–409, 410–445, 446–494, 495–529, 530–563, 564–596, 597–636, 637–683, 686–724, 727–766, 769–811, 814–853, 857–893, 894–942, 943–988, 989–1027, 1029–1068, 1069–1105, 1106–1144, 1145–1188, 1189–1225, 1226–1273, 1274–1311, and 1312–1345; these read SSNVSVLQQFASGLKSRNEETRAKAAKELQHYVTMELR, MSQE…VEGG, NSTRIGRFANYLRNLLPSSDPVVMEMASKAIGRLAMAG, DTFT…AISV, PTFF…LILT, QREP…RISS, MEGERLREEMEEITQQQLVHDKYCKDLMGFGTKPRHI, TPFT…CCRD, LMEE…AFTD, TQYLQDTMNHVLSCVKKEKERTAAFQALGLLSVAVR, SEFK…RAMG, PGIQQDIKELLEPMLAVGLSPALTAVLYDLSRQIP, QLKKDIQDGLLKMLSLVLMHKPLRHPGMPKGLAH, QLASPGLTTLPEASDVASITLALRTLGSFEFEG, HSLTQFVRHCADHFLNSEHKEIRMEAARTCSRLLTPSIHL, ISGH…DERF, HLAQAENLQALFVALNDQVFEIRELAICTVGRLSSMNPA, MPFLRKMLIQILTELEHSGIGRIKEQSARMLGHLVSNAPR, RPYM…VSGL, RKWVDELFVIIMDMLQDSSLLAKRQVALWTLGQLVASTGY, PYRKYPTLLEVLLNFLKTEQNQGTRREAIRVLGLLGA, LDPY…GNLP, LDEF…KCVQ, FLPQVMPTFLNVIRVCDGAIREFLFQQLGMLVSFVKSHI, PYMDEIVTLMREFWVMNTSIQSTIILLIEQIVVALGGEFK, LYLPQLIPHMLRVFMHDNSQGRIVSIKLLAAIQLFGA, NLDDYLHLLLPPIVKLFDAPEVPLPSRKAALETVDRLTE, SLDF…GKKY, QIFIPMVNKVLVRHRINHQRYDVLICRIVKGYTLADE, EEDP…GAAR, RVSKDDWLEWLRRLSLELLKDSSSPSLRSCWALAQAYN, and PMARDLFNAAFVSCWSELNEDQQDELIRSIELAL. At S567 the chain carries Phosphoserine. Position 1162 is a phosphothreonine (T1162). The residue at position 1218 (K1218) is an N6-acetyllysine. Residue S1261 is modified to Phosphoserine. TPR repeat units follow at residues 1346-1382, 1383-1408, 1409-1442, 1443-1473, 1474-1507, 1508-1541, 1542-1574, 1575-1614, 1615-1649, 1650-1693, 1694-1731, 1732-1786, 1787-1846, 1898-1930, 1931-1970, and 1971-2005; these read TSQDIAEVTQTLLNLAEFMEHSDKGPLPLRDDNGIVL, LGERAAKCRAYAKALHYKELEFQKGP, TPAILESLISINNKLQQPEAASGVLEYAMKHFGE, LEIQATWYEKLHEWEDALVAYDKKMDTNKDD, PELMLGRMRCLEALGEWGQLHQQCCEKWTLVNDE, TQAKMARMAAAAAWGLGQWDSMEEYTCMIPRDTH, DGAFYRAVLALHQDLFSLAQQCIDKARDLLDAE, LTAMAGESYSRAYGAMVSCHMLSELEEVIQYKLVPERREI, IRQIWWERLQGCQRIVEDWQKILMVRSLVVSPHED, MRTW…PTVH, PQVTYAYMKNMWKSARKIDAFQHMQHFVQTMQQQAQHA, IATE…DRSW, YKAW…STEG, NNLQDTLRVLTLWFDYGHWPDVNEALVEGVKAI, QIDTWLQVIPQLIARIDTPRPLVGRLIHQLLTDIGRYHPQ, and ALIYPLTVASKSTTTARHNAANKILKNMCEHSNTL. One can recognise an FAT domain in the interval 1382-1982; that stretch reads LLGERAAKCR…IYPLTVASKS (601 aa). 1D-myo-inositol hexakisphosphate contacts are provided by K1662, K1702, and R1749. The segment at 1812–1867 is disordered; it reads DEKKKLRHASGANITNATTTATTAASAAAATSTEGSNSESEAESNESSPTPSPLQK. The segment covering 1826–1860 has biased composition (low complexity); it reads TNATTTATTAASAAAATSTEGSNSESEAESNESSP. The tract at residues 2012–2144 is sufficient for interaction with the FKBP1A/rapamycin complex; it reads VSEELIRVAI…DLELAVPGTY (133 aa). Residue K2066 forms a Glycyl lysine isopeptide (Lys-Gly) (interchain with G-Cter in ubiquitin) linkage. A PI3K/PI4K catalytic domain is found at 2156–2469; it reads IAPSLQVITS…GVELGEPAHK (314 aa). Phosphoserine is present on S2159. A G-loop region spans residues 2162-2168; the sequence is VITSKQR. At T2164 the chain carries Phosphothreonine. ATP contacts are provided by S2165 and Q2167. At T2173 the chain carries Phosphothreonine; by PKB/AKT1. Residues L2185, K2187, E2190, Y2225, G2238, W2239, V2240, and T2245 each coordinate ATP. The tract at residues 2258–2296 is interaction with MLST8; the sequence is KILLNIEHRIMLRMAPDYDHLTLMQKVEVFEHAVNNTAG. Positions 2335 to 2343 are catalytic loop; sequence GLGDRHPSN. A Mg(2+)-binding site is contributed by N2343. Residues M2345 and I2356 each contribute to the ATP site. The tract at residues 2355-2380 is activation loop; it reads HIDFGDCFEVAMTREKFPEKIPFRLT. Residue D2357 participates in Mg(2+) binding. T2446 carries the post-translational modification Phosphothreonine; by RPS6KB1. S2448 carries the phosphoserine; by RPS6KB1 modification. S2478 carries the phosphoserine modification. The residue at position 2481 (S2481) is a Phosphoserine; by autocatalysis. An FATC domain is found at 2517–2549; the sequence is DTLDVPTQVELLIKQATSHENLCQCYIGWCPFW.

It belongs to the PI3/PI4-kinase family. Part of the mechanistic target of rapamycin complex 1 (mTORC1) which contains MTOR, MLST8 and RPTOR. The mTORC1 complex is a 1 Md obligate dimer of two stoichiometric heterotetramers with overall dimensions of 290 A x 210 A x 135 A. It has a rhomboid shape and a central cavity, the dimeric interfaces are formed by interlocking interactions between the two MTOR and the two RPTOR subunits. The MLST8 subunit forms distal foot-like protuberances, and contacts only one MTOR within the complex, while the small AKT1S1/PRAS40 localizes to the midsection of the central core, in close proximity to RPTOR. mTORC1 associates with AKT1S1/PRAS40, which inhibits its activity by blocking MTOR substrate-recruitment site. Component of the mechanistic target of rapamycin complex 2 (mTORC2), consisting in two heterotretramers composed of MTOR, MLST8, RICTOR and MAPKAP1/SIN1. Interacts with PLPP7 and PML. Interacts with PRR5 and RICTOR; the interaction is direct within the mTORC2 complex and interaction with RICTOR is enhanced by deubiquitination of RICTOR by USP9X. mTORC1 and mTORC2 associate with DEPTOR, which regulates their activity. Interacts with WAC; WAC positively regulates MTOR activity by promoting the assembly of the TTT complex composed of TELO2, TTI1 and TTI2 and the RUVBL complex composed of RUVBL1 and RUVBL2 into the TTT-RUVBL complex which leads to the dimerization of the mTORC1 complex and its subsequent activation. Interacts with UBQLN1. Interacts with TTI1 and TELO2. Interacts with CLIP1; phosphorylates and regulates CLIP1. Interacts with NBN. Interacts with HTR6. Interacts with BRAT1. Interacts with MEAK7 (via C-terminal domain); the interaction increases upon nutrient stimulation. Interacts with TM4SF5; the interaction is positively regulated by arginine and is negatively regulated by leucine. Interacts with GPR137B. Interacts with NCKAP1L. Interacts with TPCN1 and TPCN2; the interaction is required for TPCN1 and TPCN2 sensitivity to ATP. Interacts with ATP6V1A and with CRYAB, forming a ternary complex. Interacts with SLC38A7; this interaction mediates the recruitment of mTORC1 to the lysosome and its subsequent activation. Interacts with TSPAN8. In terms of processing, autophosphorylates when part of mTORC1 or mTORC2. Phosphorylation at Ser-1261, Ser-2159 and Thr-2164 promotes autophosphorylation. Phosphorylated at Ser-2448 by RPS6KB1. Phosphorylation in the kinase domain modulates the interactions of MTOR with RPTOR and AKT1S1/PRAS40 and leads to increased intrinsic mTORC1 kinase activity. Phosphorylation at Ser-2159 by TBK1 in response to growth factors and pathogen recognition receptors promotes mTORC1 activity. Phosphorylation at Ser-2159 by TBK1 in response to EGF growth factor promotes mTORC2 activity, leading to AKT1 phosphorylation and activation. Phosphorylation at Thr-2173 in the ATP-binding region by AKT1 strongly reduces kinase activity. Ubiquitinated at Lys-2066 by the SCF(FBXO22) complex via 'Lys-27'-linked ubiquitination prevents mTORC1 substrate recruitment.

The protein localises to the lysosome membrane. It localises to the endoplasmic reticulum membrane. The protein resides in the golgi apparatus membrane. It is found in the cell membrane. Its subcellular location is the mitochondrion outer membrane. The protein localises to the cytoplasm. It localises to the nucleus. The protein resides in the PML body. It is found in the microsome membrane. Its subcellular location is the cytoplasmic vesicle. The protein localises to the phagosome. It carries out the reaction L-seryl-[protein] + ATP = O-phospho-L-seryl-[protein] + ADP + H(+). It catalyses the reaction L-threonyl-[protein] + ATP = O-phospho-L-threonyl-[protein] + ADP + H(+). The catalysed reaction is L-tyrosyl-[protein] + ATP = O-phospho-L-tyrosyl-[protein] + ADP + H(+). The mTORC1 complex is activated in response to nutrients, growth factors or amino acids: activation requires relocalization of the mTORC1 complex to lysosomes that is mediated by the Ragulator complex, SLC38A9, and the Rag GTPases RagA/RRAGA, RagB/RRAGB, RagC/RRAGC and RagD/RRAGD. Activation of mTORC1 by growth factors such as insulin involves AKT1-mediated phosphorylation of TSC1-TSC2, which leads to the activation of the RHEB GTPase a potent activator of the protein kinase activity of mTORC1. Insulin-stimulated and amino acid-dependent phosphorylation at Ser-1261 promotes autophosphorylation and the activation of mTORC1. On the other hand, low cellular energy levels can inhibit mTORC1 through activation of PRKAA1 while hypoxia inhibits mTORC1 through a REDD1-dependent mechanism which may also require PRKAA1. The kinase activity of MTOR within the mTORC1 complex is positively regulated by MLST8. The kinase activity of MTOR is inhibited by DEPTOR and AKT1S1. The non-canonical mTORC1 complex is independent of the RHEB GTPase and specifically mediates phosphorylation of MiT/TFE factors TFEB and TFE3 but not other mTORC1 substrates: it is activated by FLCN, which activates Rag GTPases RagC/RRAGC and RagD/RRAGD. MTOR is the target of the immunosuppressive and anti-cancer drug rapamycin which acts in complex with FKBP1A/FKBP12, and specifically inhibits its kinase activity. mTORC2 is also activated by growth factors, but seems to be nutrient-insensitive. mTORC2 associates and is directly activated by ribosomes. mTORC2 may also be regulated by RHEB but in an indirect manner through the PI3K signaling pathway. Its function is as follows. Serine/threonine protein kinase which is a central regulator of cellular metabolism, growth and survival in response to hormones, growth factors, nutrients, energy and stress signals. MTOR directly or indirectly regulates the phosphorylation of at least 800 proteins. Functions as part of 2 structurally and functionally distinct signaling complexes mTORC1 and mTORC2 (mTOR complex 1 and 2). In response to nutrients, growth factors or amino acids, mTORC1 is recruited to the lysosome membrane and promotes protein, lipid and nucleotide synthesis by phosphorylating key regulators of mRNA translation and ribosome synthesis. This includes phosphorylation of EIF4EBP1 and release of its inhibition toward the elongation initiation factor 4E (eiF4E). Moreover, phosphorylates and activates RPS6KB1 and RPS6KB2 that promote protein synthesis by modulating the activity of their downstream targets including ribosomal protein S6, eukaryotic translation initiation factor EIF4B, and the inhibitor of translation initiation PDCD4. Stimulates the pyrimidine biosynthesis pathway, both by acute regulation through RPS6KB1-mediated phosphorylation of the biosynthetic enzyme CAD, and delayed regulation, through transcriptional enhancement of the pentose phosphate pathway which produces 5-phosphoribosyl-1-pyrophosphate (PRPP), an allosteric activator of CAD at a later step in synthesis, this function is dependent on the mTORC1 complex. Regulates ribosome synthesis by activating RNA polymerase III-dependent transcription through phosphorylation and inhibition of MAF1 an RNA polymerase III-repressor. Activates dormant ribosomes by mediating phosphorylation of SERBP1, leading to SERBP1 inactivation and reactivation of translation. In parallel to protein synthesis, also regulates lipid synthesis through SREBF1/SREBP1 and LPIN1. To maintain energy homeostasis mTORC1 may also regulate mitochondrial biogenesis through regulation of PPARGC1A. In the same time, mTORC1 inhibits catabolic pathways: negatively regulates autophagy through phosphorylation of ULK1. Under nutrient sufficiency, phosphorylates ULK1 at 'Ser-758', disrupting the interaction with AMPK and preventing activation of ULK1. Also prevents autophagy through phosphorylation of the autophagy inhibitor DAP. Also prevents autophagy by phosphorylating RUBCNL/Pacer under nutrient-rich conditions. Prevents autophagy by mediating phosphorylation of AMBRA1, thereby inhibiting AMBRA1 ability to mediate ubiquitination of ULK1 and interaction between AMBRA1 and PPP2CA. mTORC1 exerts a feedback control on upstream growth factor signaling that includes phosphorylation and activation of GRB10 a INSR-dependent signaling suppressor. Among other potential targets mTORC1 may phosphorylate CLIP1 and regulate microtubules. The mTORC1 complex is inhibited in response to starvation and amino acid depletion. The non-canonical mTORC1 complex, which acts independently of RHEB, specifically mediates phosphorylation of MiT/TFE factors TFEB and TFE3 in the presence of nutrients, promoting their cytosolic retention and inactivation. Upon starvation or lysosomal stress, inhibition of mTORC1 induces dephosphorylation and nuclear translocation of TFEB and TFE3, promoting their transcription factor activity. The mTORC1 complex regulates pyroptosis in macrophages by promoting GSDMD oligomerization. MTOR phosphorylates RPTOR which in turn inhibits mTORC1. As part of the mTORC2 complex, MTOR transduces signals from growth factors to pathways involved in proliferation, cytoskeletal organization, lipogenesis and anabolic output. In response to growth factors, mTORC2 phosphorylates and activates AGC protein kinase family members, including AKT (AKT1, AKT2 and AKT3), PKC (PRKCA, PRKCB and PRKCE) and SGK1. In contrast to mTORC1, mTORC2 is nutrient-insensitive. mTORC2 plays a critical role in AKT1 activation by mediating phosphorylation of different sites depending on the context, such as 'Thr-450', 'Ser-473', 'Ser-477' or 'Thr-479', facilitating the phosphorylation of the activation loop of AKT1 on 'Thr-308' by PDPK1/PDK1 which is a prerequisite for full activation. mTORC2 also regulates the phosphorylation of SGK1 at 'Ser-422'. mTORC2 may regulate the actin cytoskeleton, through phosphorylation of PRKCA, PXN and activation of the Rho-type guanine nucleotide exchange factors RHOA and RAC1A or RAC1B. The mTORC2 complex also phosphorylates various proteins involved in insulin signaling, such as FBXW8 and IGF2BP1. May also regulate insulin signaling by acting as a tyrosine protein kinase that catalyzes phosphorylation of IGF1R and INSR. Regulates osteoclastogenesis by adjusting the expression of CEBPB isoforms. Plays an important regulatory role in the circadian clock function; regulates period length and rhythm amplitude of the suprachiasmatic nucleus (SCN) and liver clocks. The polypeptide is Serine/threonine-protein kinase mTOR (Rattus norvegicus (Rat)).